The sequence spans 127 residues: Dual endothelin-1/VEGF signal peptide receptor (127 aa).

Residues 1–69 are Extracellular-facing; the sequence is MSTFYVTAVP…EMKSRWNWGS (69 aa). Residues 70–88 traverse the membrane as a helical segment; the sequence is ITCIMCFTCVGSQLSMSSS. The Cytoplasmic portion of the chain corresponds to 89 to 127; the sequence is KASNFSGPLQLYQRGIGHITNPYRRPPAPAWPCSSSGTT.

Prominently expressed in brain and heart tissues. Weakly expressed in aorta, adrenal gland, and lung tissues.

The protein localises to the cell membrane. In the Dahl salt-resistant strain, acts as a dual receptor for both endothelin-1 and the signal sequence of vascular endothelial growth factor A and does not act as a receptor for angiotensin-2. Does not bind the VEGFA mature protein. In the Dahl salt-sensitive strain, acts as a dual endothelin-1/angiotensin-2 receptor that is functionally coupled to a calcium-mobilizing transduction system, responding equivalently to both endothelin-1/EDN1 and angiotensin-2 peptides in a highly specific manner. May play a role in angiogenesis with a significant role in cardiovascular and neural development. The protein is Dual endothelin-1/VEGF signal peptide receptor of Rattus norvegicus (Rat).